Consider the following 254-residue polypeptide: D-aminoacyl-tRNA deacylase (254 aa).

The disordered stretch occupies residues 61-83; sequence KPTLTVHTPGNLTEDNSHGGNPE. Polar residues predominate over residues 65 to 74; sequence TVHTPGNLTE.

This sequence belongs to the DtdA deacylase family. As to quaternary structure, monomer. Zn(2+) serves as cofactor.

It carries out the reaction a D-aminoacyl-tRNA + H2O = a tRNA + a D-alpha-amino acid + H(+). The enzyme catalyses glycyl-tRNA(Ala) + H2O = tRNA(Ala) + glycine + H(+). Its function is as follows. D-aminoacyl-tRNA deacylase with broad substrate specificity. By recycling D-aminoacyl-tRNA to D-amino acids and free tRNA molecules, this enzyme counteracts the toxicity associated with the formation of D-aminoacyl-tRNA entities in vivo. This is D-aminoacyl-tRNA deacylase from Methanococcus maripaludis (strain C7 / ATCC BAA-1331).